The primary structure comprises 2466 residues: Highly reducing polyketide synthase apmlA (2466 aa).

The tract at residues 1-57 (MSDHNHTNGTTNGNGIGSNGVQSHVPNGAHINGTSSGLKPNGISNGTTNGINGHAPS) is disordered. Positions 41–53 (NGISNGTTNGING) are enriched in low complexity. Residues 62–491 (QTPVAVVGLA…GTNAHVVLEA (430 aa)) form the Ketosynthase family 3 (KS3) domain. Catalysis depends on for beta-ketoacyl synthase activity residues cysteine 235, histidine 372, and histidine 412. Residues 608 to 921 (IFTGQGAQWS…QYVAAAKRGA (314 aa)) are malonyl-CoA:ACP transacylase (MAT) domain. The For malonyltransferase activity role is filled by serine 700. The interval 988 to 1124 (HDLLGSKILS…GLVRIDEEAF (137 aa)) is N-terminal hotdog fold. Positions 988–1297 (HDLLGSKILS…RFDPISSRGD (310 aa)) are dehydratase (DH) domain. In terms of domain architecture, PKS/mFAS DH spans 988–1298 (HDLLGSKILS…FDPISSRGDQ (311 aa)). Catalysis depends on histidine 1020, which acts as the Proton acceptor; for dehydratase activity. A C-terminal hotdog fold region spans residues 1137–1298 (AHPEPGAVGY…FDPISSRGDQ (162 aa)). Aspartate 1202 acts as the Proton donor; for dehydratase activity in catalysis. The segment at 1737-2061 (GTIDSLHYAE…STKHMGKLVL (325 aa)) is enoyl reductase (ER) domain. Positions 2087–2264 (TYLLVGGLKG…STVNLGIIEQ (178 aa)) are ketoreductase (KR) domain. In terms of domain architecture, Carrier spans 2382–2462 (ANLPQVVDAT…FLAEKIITKV (81 aa)). Position 2422 is an O-(pantetheine 4'-phosphoryl)serine (serine 2422).

It depends on pantetheine 4'-phosphate as a cofactor.

It functions in the pathway secondary metabolite biosynthesis. In terms of biological role, highly reducing polyketide synthase (HR-PKS); part of the gene cluster that mediates the biosynthesis of phaeospelide A, a fungal polyene macrolide with a 34-membered macrolactone ring and an all-trans conjugated hexaene structure. The HR-PKS ApmlA uses acetyl-CoA and malonyl-CoA as its starter and extender units, respectively, and provides the large carbon framework in phaeospelide via 16 cycles of polyketide chain elongation, which is the largest number identified in fungal iterative PKSs thus far. During round 1, the KR domain reduces beta-ketone to an L-oriented hydroxy group, while during later rounds, it provides hydroxy groups in the D-configuration. The characteristic conjugated hexaene moiety is built during the later rounds (10-15), when the KR and DH domains are at work but ER is off. Phylogenetic analysis of the DH domain suggests that a polyene formation is programmed in the DH domain. Finally, the mature ACP-tethered carbon chain is transferred to the serine residue of the thiohydrolase apmlB, followed by intramolecular macrolactonization, generating phaeospelide A. When one elongation cycle during rounds 7-9 is skipped, phaeospelide B is biosynthesized instead. The protein is Highly reducing polyketide synthase apmlA of Arthrinium phaeospermum (Gymnosporium phaeospermum).